The sequence spans 111 residues: Aquaporin-2 (111 aa).

At 1 to 6 (SIAFSR) the chain is on the cytoplasmic side. The helical transmembrane segment at 7 to 27 (AVFSEFLATLLFVFFGLGSAL) threads the bilayer. Topologically, residues 28 to 37 (NWPSTVPIPT) are extracellular. The helical transmembrane segment at 38 to 56 (VLQISMAFGLAIGTLVQTL) threads the bilayer. The Cytoplasmic portion of the chain corresponds to 57–61 (GHISG). The discontinuously helical intramembrane region spans 62–71 (AHINPAVTVA). The NPA 1 signature appears at 65-67 (NPA). Topologically, residues 72–82 (CLVGCHVSFLR) are cytoplasmic. A helical membrane pass occupies residues 83–104 (ATFYVAAQLLGAVAGAALLHKL). Topologically, residues 105 to 111 (TPEDIRG) are extracellular.

Belongs to the MIP/aquaporin (TC 1.A.8) family. As to quaternary structure, homotetramer. In terms of processing, serine phosphorylation is necessary and sufficient for expression at the apical membrane. Endocytosis is not phosphorylation-dependent. Post-translationally, N-glycosylated.

It is found in the apical cell membrane. The protein localises to the basolateral cell membrane. It localises to the cell membrane. Its subcellular location is the cytoplasmic vesicle membrane. The protein resides in the golgi apparatus. It is found in the trans-Golgi network membrane. The catalysed reaction is H2O(in) = H2O(out). It catalyses the reaction glycerol(in) = glycerol(out). In terms of biological role, forms a water-specific channel that provides the plasma membranes of renal collecting duct with high permeability to water, thereby permitting water to move in the direction of an osmotic gradient. Plays an essential role in renal water homeostasis. Could also be permeable to glycerol. The protein is Aquaporin-2 of Macroscelides proboscideus (Short-eared elephant shrew).